A 163-amino-acid polypeptide reads, in one-letter code: Ribosome maturation factor RimM (163 aa).

The 69-residue stretch at 94-162 (ADEYYYIDLI…DHLVIAADFI (69 aa)) folds into the PRC barrel domain.

The protein belongs to the RimM family. Binds ribosomal protein uS19.

The protein localises to the cytoplasm. In terms of biological role, an accessory protein needed during the final step in the assembly of 30S ribosomal subunit, possibly for assembly of the head region. Essential for efficient processing of 16S rRNA. May be needed both before and after RbfA during the maturation of 16S rRNA. It has affinity for free ribosomal 30S subunits but not for 70S ribosomes. This chain is Ribosome maturation factor RimM, found in Zymomonas mobilis subsp. mobilis (strain ATCC 31821 / ZM4 / CP4).